Consider the following 287-residue polypeptide: Cell wall-binding protein YocH (287 aa).

Residues 1–25 form the signal peptide; it reads MKKTIMSFVAVAALSTTAFGAHASA. 2 consecutive LysM domains span residues 26–69 and 78–121; these read KEIT…KLTI and GQYT…TLSV. Residues 130–143 are compositionally biased toward low complexity; that stretch reads TATENAQTNAPQAA. The tract at residues 130 to 193 is disordered; that stretch reads TATENAQTNA…SNTNNQEASK (64 aa). Residues 165 to 181 are compositionally biased toward basic and acidic residues; that stretch reads QETKAEAETSVNTEEKA. The segment covering 182-193 has biased composition (polar residues); sequence VQSNTNNQEASK.

It is found in the secreted. The protein localises to the cell wall. In Bacillus subtilis (strain 168), this protein is Cell wall-binding protein YocH (yocH).